A 320-amino-acid chain; its full sequence is Ferrochelatase (320 aa).

Positions 194 and 275 each coordinate Fe cation.

This sequence belongs to the ferrochelatase family.

It is found in the cytoplasm. It catalyses the reaction heme b + 2 H(+) = protoporphyrin IX + Fe(2+). The protein operates within porphyrin-containing compound metabolism; protoheme biosynthesis; protoheme from protoporphyrin-IX: step 1/1. Functionally, catalyzes the ferrous insertion into protoporphyrin IX. In Stenotrophomonas maltophilia (strain R551-3), this protein is Ferrochelatase.